A 266-amino-acid polypeptide reads, in one-letter code: Glucosamine-6-phosphate deaminase (266 aa).

Catalysis depends on aspartate 72, which acts as the Proton acceptor; for enolization step. The For ring-opening step role is filled by aspartate 141. Histidine 143 (proton acceptor; for ring-opening step) is an active-site residue. Glutamate 148 (for ring-opening step) is an active-site residue.

The protein belongs to the glucosamine/galactosamine-6-phosphate isomerase family. NagB subfamily. In terms of assembly, homohexamer.

The catalysed reaction is alpha-D-glucosamine 6-phosphate + H2O = beta-D-fructose 6-phosphate + NH4(+). It participates in amino-sugar metabolism; N-acetylneuraminate degradation; D-fructose 6-phosphate from N-acetylneuraminate: step 5/5. With respect to regulation, allosterically activated by N-acetylglucosamine 6-phosphate (GlcNAc6P). Catalyzes the reversible isomerization-deamination of glucosamine 6-phosphate (GlcN6P) to form fructose 6-phosphate (Fru6P) and ammonium ion. The protein is Glucosamine-6-phosphate deaminase of Tolumonas auensis (strain DSM 9187 / NBRC 110442 / TA 4).